Consider the following 547-residue polypeptide: uncharacterized protein (547 aa).

The segment covering 1–18 (MEYHPSSQSPQVNPGMES) has biased composition (polar residues). Disordered stretches follow at residues 1–41 (MEYH…LQHP) and 80–165 (PSYP…VKRQ). Low complexity-rich tracts occupy residues 19–29 (QQGGYTYTYQQ) and 83–94 (PQSSSAPSNNSY). Residues 121–135 (VPSPSPIEMVPPSPP) are compositionally biased toward pro residues. Positions 136 to 160 (KTGSNNSAPVTGKTVQSGNALNNSG) are enriched in polar residues. The zn(2)-C6 fungal-type DNA-binding region spans 174–201 (CLTCRKRRIKCDERKPICYNCIKSKRQC).

It is found in the nucleus. This is an uncharacterized protein from Schizosaccharomyces pombe (strain 972 / ATCC 24843) (Fission yeast).